Consider the following 200-residue polypeptide: MAEQGLEGSQPVDPIKHPSGIVPTLQNIVSTVNLDCKLDLKAIALQARNAEYNPKRFAAVIMRIREPKTTALIFASGKMVCTGAKSEQQSKLAARKYARIIQKLGFPAKFKDFKIQNIVGSCDVKFPIRLEGLAYSHGAFSSYEPELFPGLIYRMKQPKIVLLIFVSGKIVLTGAKVREETYTAFENIYPVLTEFRKNQQ.

2 tandem repeats follow at residues 25–101 (LQNI…ARII) and 115–192 (IQNI…YPVL).

It belongs to the TBP family. Belongs to the TFIID complex together with the TBP-associated factors (TAFs). Binds DNA as monomer.

The protein localises to the nucleus. Its function is as follows. General transcription factor that functions at the core of the DNA-binding multiprotein factor TFIID. Binding of TFIID to the TATA box is the initial transcriptional step of the pre-initiation complex (PIC), playing a role in the activation of eukaryotic genes transcribed by RNA polymerase II. The chain is TATA-box-binding protein from Mesembryanthemum crystallinum (Common ice plant).